The following is a 414-amino-acid chain: Bifunctional protein GlmU (414 aa).

The pyrophosphorylase stretch occupies residues 1-208 (MDAVILCAGS…SSKLYGIELN (208 aa)). UTP contacts are provided by residues 6 to 9 (LCAG), Q74, and G79. Residues T80, G130, N142, and N162 each coordinate N-acetyl-alpha-D-glucosamine 1-phosphate. Positions 209-228 (GYWNDIGRPWDVLSANNYFL) are linker. The interval 229–414 (KNIMPKISGN…KDELIIKKRN (186 aa)) is N-acetyltransferase. Catalysis depends on H312, which acts as the Proton acceptor. The acetyl-CoA site is built by A388 and K405.

In the N-terminal section; belongs to the N-acetylglucosamine-1-phosphate uridyltransferase family. The protein in the C-terminal section; belongs to the transferase hexapeptide repeat family.

The catalysed reaction is N-acetyl-alpha-D-glucosamine 1-phosphate + UTP + H(+) = UDP-N-acetyl-alpha-D-glucosamine + diphosphate. It catalyses the reaction alpha-D-glucosamine 1-phosphate + acetyl-CoA = N-acetyl-alpha-D-glucosamine 1-phosphate + CoA + H(+). Its pathway is nucleotide-sugar biosynthesis; UDP-N-acetyl-alpha-D-glucosamine biosynthesis; N-acetyl-alpha-D-glucosamine 1-phosphate from alpha-D-glucosamine 6-phosphate (route II): step 2/2. It participates in nucleotide-sugar biosynthesis; UDP-N-acetyl-alpha-D-glucosamine biosynthesis; UDP-N-acetyl-alpha-D-glucosamine from N-acetyl-alpha-D-glucosamine 1-phosphate: step 1/1. Catalyzes the last two sequential reactions in the de novo biosynthetic pathway for UDP-N-acetyl-glucosamine (UDP-GlcNAc). Responsible for the acetylation of GlcN-1-P to GlcNAc-1-P, and for the uridyl transfer from UTP to GlcNAc-1-P, to produce UDP-GlcNAc and pyrophosphate. In Methanococcus vannielii (strain ATCC 35089 / DSM 1224 / JCM 13029 / OCM 148 / SB), this protein is Bifunctional protein GlmU.